The following is a 421-amino-acid chain: MIFIEDIFADEVLDSRGNPTVRATVTLSDGSRASAIVPSGASTGVNEALELRDGGERYLGKGVLKACENVNTLIANELIGMSPYDQAEIDNIMLELDGTENKSKLGANAILGVSMAVARAAANSLDLPLFRYLGGANALVLPTPMLNIINGGAHADNDVDLQEYMIMPTGFDDFAEALRASSEVYHTLKKLLVADGHNTALGDEGGFAPNFKNNEEPIEYIIKAIEKAGYKPGEEITIALDAASSEFYKDGKYVLAGENKTLSAEELVDYYAYLCGKYPIVSIEDGVAEEDWEGWKILTDKLGDKIQLVGDDLFVTNKKILQKGIELGVANAILIKPNQIGTVSETMQTVRLAQRNNYKTVMSHRSGESEDAFIADFAVALNCGEIKTGAPARGERNAKYNRLLEIARSIAGAEYIGKDLF.

Residue glutamine 162 coordinates (2R)-2-phosphoglycerate. Catalysis depends on glutamate 204, which acts as the Proton donor. Aspartate 241, glutamate 284, and aspartate 311 together coordinate Mg(2+). Residues lysine 336, arginine 365, serine 366, and lysine 387 each contribute to the (2R)-2-phosphoglycerate site. The active-site Proton acceptor is the lysine 336.

This sequence belongs to the enolase family. Mg(2+) serves as cofactor.

The protein localises to the cytoplasm. Its subcellular location is the secreted. It localises to the cell surface. It catalyses the reaction (2R)-2-phosphoglycerate = phosphoenolpyruvate + H2O. It functions in the pathway carbohydrate degradation; glycolysis; pyruvate from D-glyceraldehyde 3-phosphate: step 4/5. Its function is as follows. Catalyzes the reversible conversion of 2-phosphoglycerate (2-PG) into phosphoenolpyruvate (PEP). It is essential for the degradation of carbohydrates via glycolysis. This chain is Enolase, found in Nautilia profundicola (strain ATCC BAA-1463 / DSM 18972 / AmH).